A 98-amino-acid chain; its full sequence is Large ribosomal subunit protein uL23c (98 aa).

This sequence belongs to the universal ribosomal protein uL23 family. In terms of assembly, part of the 50S ribosomal subunit.

The protein localises to the plastid. Its function is as follows. Binds to 23S rRNA. This chain is Large ribosomal subunit protein uL23c (rpl23), found in Euglena longa (Euglenophycean alga).